The primary structure comprises 229 residues: Prolactin (229 aa).

Positions 1–30 (MDNKGWSLKGSLLPLLLLVSDLLLCQGVTS) are cleaved as a signal peptide. A disulfide bridge links C34 with C41. A phosphoserine mark is found at S56, S64, and S120. Cystine bridges form between C88–C204 and C221–C229.

This sequence belongs to the somatotropin/prolactin family. As to quaternary structure, interacts with PRLR.

The protein localises to the secreted. In terms of biological role, prolactin acts primarily on the mammary gland by promoting lactation. The polypeptide is Prolactin (PRL) (Neovison vison (American mink)).